Here is a 91-residue protein sequence, read N- to C-terminus: Protein transport protein Sec61 subunit beta (91 aa).

A disordered region spans residues 1-45; sequence MSTSAQVPGGPAAQMKRRNNAQRQEAKASQRPTSTRSVGAGGSSS. Residues 1 to 62 lie on the Cytoplasmic side of the membrane; the sequence is MSTSAQVPGG…DESQGLKVDP (62 aa). Positions 30 to 45 are enriched in polar residues; that stretch reads QRPTSTRSVGAGGSSS. Residues 63–83 traverse the membrane as a helical segment; sequence VVVMVLSLGFIFSVVALHILA.

This sequence belongs to the SEC61-beta family. In terms of assembly, heterotrimeric complex composed of SEC61, SEB1 and SSS1.

The protein resides in the endoplasmic reticulum membrane. Functionally, necessary for protein translocation in the endoplasmic reticulum. The protein is Protein transport protein Sec61 subunit beta (SBH1) of Yarrowia lipolytica (strain CLIB 122 / E 150) (Yeast).